Consider the following 301-residue polypeptide: Glycosyltransferase GlyG (301 aa).

It belongs to the glycosyltransferase 2 family.

It participates in protein modification; protein glycosylation. In terms of biological role, involved in the polymorphic O-glycosylation of the serine-rich repeat protein PsrP. Catalyzes the third step in glycosylation PsrP in this bacteria. Transfers glucose from UDP-glucose to the terminal glucose moiety of already-glycosylated PsrP (using truncated substrates with PsrP SSR1-GlcNAc-Glc). Has a marked preference for PsrP substrate that has already been modified by GlcNAc and glucose. In vitro has hydrolytic activity against UDP-glucose and to a lesser extent against UDP-galactose. Functionally, also catalyzes the fourth step in glycosylation of the serine-rich repeat protein PsrP in this bacteria. Can transfer the sugar from UDP-glucose (and much less well from UDP-galactose) to the terminal sugar moiety of PsrP-GlcNAc-Glc-Gal or of PsrP-GlcNAc-Glc-Glc. This Streptococcus pneumoniae serotype 4 (strain ATCC BAA-334 / TIGR4) protein is Glycosyltransferase GlyG.